The sequence spans 249 residues: 3-deoxy-D-manno-octulosonic acid kinase (249 aa).

The active site involves aspartate 175.

The protein belongs to the protein kinase superfamily. KdkA/RfaP family.

Its subcellular location is the cell inner membrane. The enzyme catalyses an alpha-Kdo-(2-&gt;6)-lipid IVA + ATP = a 4-O-phospho-alpha-Kdo-(2-&gt;6)-lipid IVA + ADP + H(+). The protein operates within bacterial outer membrane biogenesis; LPS core biosynthesis. Functionally, catalyzes the ATP-dependent phosphorylation of the 3-deoxy-D-manno-octulosonic acid (Kdo) residue in Kdo-lipid IV(A) at the 4-OH position. This is 3-deoxy-D-manno-octulosonic acid kinase from Xanthomonas campestris pv. campestris (strain 8004).